Reading from the N-terminus, the 273-residue chain is MYNMYYCKRNKYISNYSFGKNNKGHITIKHRQGLFIKSSQLKNTNYNYIFKKNIFNIINYNNKKIIKLQILKKIIDYKLQKYIYKVICLNNSLNYQYKYLPITKNTKEGDIIYIGETIELKIGNILPIKKIPCGSWIHNIEHNPTKGAVFVKNSKISAFLIYIGKKYVTIKLPSGEIRLLNKNVFCILGELNIIPLFLKKNKAGFNRLLGKRPKVRGVAMNACDHPHGGGEGKNSIGRSSVYSPWGTISKGIITRKSKKYSKKLILKNRKKND.

It belongs to the universal ribosomal protein uL2 family. Part of the 50S ribosomal subunit.

It localises to the plastid. It is found in the apicoplast. The sequence is that of Large ribosomal subunit protein uL2c (rpl2) from Eimeria tenella (Coccidian parasite).